Consider the following 154-residue polypeptide: UPF0756 membrane protein CKR_1028 (154 aa).

Helical transmembrane passes span 5–25, 48–68, 82–102, and 113–133; these read IILIIILTASVLGRANSVALA, NGLFLGLVILIASILIPIADG, WLGIFALLVSLFTTYLSGLGM, and IMPALILGAVIAAAFLGGVPV.

Belongs to the UPF0756 family.

The protein localises to the cell membrane. This chain is UPF0756 membrane protein CKR_1028, found in Clostridium kluyveri (strain NBRC 12016).